The chain runs to 216 residues: Translation initiation factor 6 (216 aa).

Belongs to the eIF-6 family.

Binds to the 50S ribosomal subunit and prevents its association with the 30S ribosomal subunit to form the 70S initiation complex. This chain is Translation initiation factor 6, found in Thermoplasma acidophilum (strain ATCC 25905 / DSM 1728 / JCM 9062 / NBRC 15155 / AMRC-C165).